Here is a 160-residue protein sequence, read N- to C-terminus: Ribonuclease H (160 aa).

Positions Met-1 to Gln-157 constitute an RNase H type-1 domain. 4 residues coordinate Mg(2+): Asp-8, Glu-49, Asp-85, and Asp-149.

This sequence belongs to the RNase H family. As to quaternary structure, monomer. Mg(2+) serves as cofactor.

It is found in the cytoplasm. It carries out the reaction Endonucleolytic cleavage to 5'-phosphomonoester.. Its function is as follows. Endonuclease that specifically degrades the RNA of RNA-DNA hybrids. The protein is Ribonuclease H of Treponema denticola (strain ATCC 35405 / DSM 14222 / CIP 103919 / JCM 8153 / KCTC 15104).